The following is a 418-amino-acid chain: AP-1 complex subunit mu (418 aa).

The MHD domain maps to 176–417 (NNEAYFDVTE…VTKAGKFQVR (242 aa)).

The protein belongs to the adaptor complexes medium subunit family. Adaptor protein complex 1 (AP-1) is a heterotetramer composed of two large adaptins (gamma- and beta'-type subunits), a medium adaptin (mu-type subunit AP47) and a small adaptin (sigma-type subunit AP19). In terms of processing, regulated by phosphorylation.

The protein localises to the golgi apparatus. The protein resides in the cytoplasmic vesicle. It is found in the clathrin-coated vesicle membrane. Functionally, component of the adapter complexes which link clathrin to receptors in coated vesicles. Clathrin-associated protein complexes are believed to interact with the cytoplasmic tails of membrane proteins, leading to their selection and concentration. AP47 is a subunit of the plasma membrane adapter. The protein is AP-1 complex subunit mu of Diplobatis ommata (Ocellated electric ray).